The chain runs to 1066 residues: MTDQENNNNISSNPFAALFGSLADAKQFAAIQKEQLKQQSDELPASPDDSDNSVSESLDEFDYSVAEISRSFRSQQEICEQLNINHMIQRIFLITLDNSDPSLKSGNGIPSRCVYLEEMAVELEDQDWLDMGNVEQALFARLLLQDPGNHLINMTSSTTLNLSADRDAGERHIFCYLYSCFQRAKEEITKVPENLLPFAVQCRNLTVSNTRTVLLTPEIYVDQNIHEQLVDLMLEAIQGAHFEDVTEFLEEVIEALILDEEVRTFSEVMIPVFDILLGRIKDLELCQILLYAYLDILLYFTRQKDMAKVFVEYIQPKDPTNGQMYQKTLLGVILNISCLLKTPGVVENHGYFLNPSRSSPQEIKVQEANIHQFMAQFHEKIYQMLKNLLQLSPETKHCILSWLGNCLHANAGRTKIWANQMPEIFFQMYASDAFFLNLGAALLKLCQPFCKPRSSRLLTFNPTYCALKELNDEERKIKNVHMRGLDKETCLIPAVQEPKFPQNYNLVTENLALTEYTLYLGFHRLHDQMVKINQNLHRLQVAWRDAQQSSSPAADSLREQFERLMTIYLSTKTAMTEPQMLQNCLNLQVSMAVLLVQLAIGNEGSQPIELTFPLPDGYSSLAYVPEFFADNLGDFLIFLRRFADDILETSADSLEHVLHFITIFTGSIERMKNPHLRAKLAEVLEAVMPHLDQTPNPLVSSVFHRKRVFCNFQYAPQLAEALIKVFVDIEFTGDPHQFEQKFNYRRPMYPILRYMWGTDTYRESIKDLADYASKNLEAMNPPLFLRFLNLLMNDAIFLLDEAIQYLSKIKIQQIEKDRGEWDSLTPEARREKEAGLQMFGQLARFHNIMSNETIGTLAFLTSEIKSLFVHPFLAERIISMLNYFLQHLVGPKMGALKVKDFSEFDFKPQQLVSDICTIYLNLGDEENFCATVPKDGRSYSPTLFAQTVRVLKKINKPGNMIVAFSNLAERIKSLADLQQQEEETYADACDEFLDPIMSTLMCDPVVLPSSRVTVDRSTIARHLLSDQTDPFNRSPLTMDQIRPNTELKEKIQRWLAERKQQKEQLE.

A disordered region spans residues 33-57 (KEQLKQQSDELPASPDDSDNSVSES). Lys386 is modified (N6-acetyllysine). Positions 987 to 1061 (DACDEFLDPI…QRWLAERKQQ (75 aa)) constitute a U-box domain.

It belongs to the ubiquitin conjugation factor E4 family.

The protein localises to the cytoplasm. The catalysed reaction is S-ubiquitinyl-[E2 ubiquitin-conjugating enzyme]-L-cysteine + [acceptor protein]-L-lysine = [E2 ubiquitin-conjugating enzyme]-L-cysteine + N(6)-ubiquitinyl-[acceptor protein]-L-lysine.. It participates in protein modification; protein ubiquitination. Ubiquitin-protein ligase that probably functions as an E3 ligase in conjunction with specific E1 and E2 ligases. May also function as an E4 ligase mediating the assembly of polyubiquitin chains on substrates ubiquitinated by another E3 ubiquitin ligase. Mediates 'Lys-48'-linked polyubiquitination of substrates. The polypeptide is Ubiquitin conjugation factor E4 A (Pongo abelii (Sumatran orangutan)).